The following is a 397-amino-acid chain: Protein RecA (397 aa).

The segment at 1-23 (MALETKPAKDPAAEDKHELDPKR) is disordered. Residue 83 to 90 (GPESSGKT) participates in ATP binding.

The protein belongs to the RecA family.

The protein resides in the cytoplasm. Functionally, can catalyze the hydrolysis of ATP in the presence of single-stranded DNA, the ATP-dependent uptake of single-stranded DNA by duplex DNA, and the ATP-dependent hybridization of homologous single-stranded DNAs. It interacts with LexA causing its activation and leading to its autocatalytic cleavage. This Bifidobacterium longum (strain NCC 2705) protein is Protein RecA.